Here is a 110-residue protein sequence, read N- to C-terminus: Insulin (110 aa).

An N-terminal signal peptide occupies residues 1 to 24 (MAPWTRLLPLLALLSLWIPAPTRA). 3 cysteine pairs are disulfide-bonded: cysteine 31–cysteine 96, cysteine 43–cysteine 109, and cysteine 95–cysteine 100. The propeptide at 57-87 (EAEDLQGKDAELGEAPGAGGLQPSALEAPLQ) is c peptide. The interval 60-80 (DLQGKDAELGEAPGAGGLQPS) is disordered.

Belongs to the insulin family. Heterodimer of a B chain and an A chain linked by two disulfide bonds.

It is found in the secreted. In terms of biological role, insulin decreases blood glucose concentration. It increases cell permeability to monosaccharides, amino acids and fatty acids. It accelerates glycolysis, the pentose phosphate cycle, and glycogen synthesis in liver. The protein is Insulin (INS) of Felis catus (Cat).